Reading from the N-terminus, the 377-residue chain is Short chain dehydrogenase gsfE (377 aa).

Residues Asp89, Gln121, Tyr226, Ala266, and Ser268 each coordinate NADP(+). Tyr226 acts as the Proton donor in catalysis.

Belongs to the short-chain dehydrogenases/reductases (SDR) family. Highly divergent.

The catalysed reaction is dehydrogriseofulvin + NADPH + H(+) = griseofulvin + NADP(+). It functions in the pathway secondary metabolite biosynthesis; terpenoid biosynthesis. Functionally, short chain dehydrogenase; part of the gene cluster that mediates the biosynthesis of griseofulvin, an important antifungal drug that has been in use for a long time for treating dermatophyte infections. The first step of the pathway is the formation of the heptaketide backbone by gsfA which is initiated by priming with acetyl-CoA, followed by sequential condensations of 6 malonyl-CoA units. The resulting benzophenone can undergo a spontaneous dehydration to form norlichexanthone. However, the true precursor for the griseofulvin biosynthesis is not norlichexanthone, but the heptaketide benzophenone that is O-methylated at 3-OH by gsfB to produce griseophenone D which is further methylated at 9-OH by gsfC to yield griseophenone C. Griseophenone C is then substrate of halogenase gsfI which is responsible for the regio-specific chlorination at the C13 position to form griseophenone B. The cytochrome P450 gsfF catalyzes the coupling of orcinol and phloroglucinol rings in griseophenone B to form desmethyl-dehydrogriseofulvin A which is further methylated at 5-OH by gsfD to yield dehydrogriseofulvin. Finally, gsfE performs stereospecific reduction of enone 18 of dehydrogriseofulvin to afford the final product griseofulvin. The chain is Short chain dehydrogenase gsfE from Penicillium aethiopicum.